Reading from the N-terminus, the 528-residue chain is Autophagy-related protein 22 (528 aa).

At Met1–Leu98 the chain is on the cytoplasmic side. Residues Tyr99–Val119 traverse the membrane as a helical segment. The Vacuolar segment spans residues Asp120–Arg130. A helical transmembrane segment spans residues Ile131–Asp151. Residues Thr152–Gln153 are Cytoplasmic-facing. Residues Ile154–Val174 traverse the membrane as a helical segment. The Vacuolar portion of the chain corresponds to Gly175 to Arg210. The helical transmembrane segment at Gly211–Ala231 threads the bilayer. At Ser232 to Gln241 the chain is on the cytoplasmic side. The helical transmembrane segment at Val242 to Ile262 threads the bilayer. Residues Asp263–Asp318 are Vacuolar-facing. The residue at position 278 (Ser278) is a Phosphoserine. Residues Val319–Thr339 traverse the membrane as a helical segment. Residues Ala340 to Thr352 lie on the Cytoplasmic side of the membrane. Residues Leu353 to Ile373 traverse the membrane as a helical segment. Residues Pro374–Thr388 are Vacuolar-facing. The chain crosses the membrane as a helical span at residues Leu389–Phe409. The Cytoplasmic segment spans residues Asn410–Lys417. A helical membrane pass occupies residues Phe418–Ser438. The Vacuolar portion of the chain corresponds to Arg439–Tyr485. A helical membrane pass occupies residues Ser486–Val506. The Cytoplasmic segment spans residues Lys507–Asp528.

Belongs to the ATG22 family.

Its subcellular location is the vacuole membrane. Functionally, vacuolar effluxer which mediate the efflux of amino acids resulting from autophagic degradation. The release of autophagic amino acids allows the maintenance of protein synthesis and viability during nitrogen starvation. The protein is Autophagy-related protein 22 (ATG22) of Saccharomyces cerevisiae (strain YJM789) (Baker's yeast).